The chain runs to 642 residues: Triacylglycerol lipase 3 (642 aa).

The PNPLA domain occupies 204-392 (LILQGGSLFG…NEIEPFLNIN (189 aa)). Residues 235–239 (GSSMG) carry the GXSXG motif. Ser-237 serves as the catalytic Nucleophile. The HXXXXD acyltransferase motif signature appears at 298–303 (HGYSQD). Catalysis depends on Glu-403, which acts as the Proton acceptor. Positions 471–481 (RKTQRSSSQSP) are enriched in polar residues. The interval 471 to 502 (RKTQRSSSQSPIKAGTVEDLEPEPLMSPVPPS) is disordered.

It is found in the lipid droplet. It carries out the reaction a triacylglycerol + H2O = a diacylglycerol + a fatty acid + H(+). It catalyses the reaction 1,2,3-tri-(9Z-octadecenoyl)-glycerol + H2O = di-(9Z)-octadecenoylglycerol + (9Z)-octadecenoate + H(+). The catalysed reaction is di-(9Z)-octadecenoylglycerol + H2O = (9Z-octadecenoyl)-glycerol + (9Z)-octadecenoate + H(+). The enzyme catalyses a 1-acyl-sn-glycero-3-phosphoethanolamine + (9Z)-octadecenoyl-CoA = 1-acyl-2-(9Z)-octadecenoyl-sn-glycero-3-phosphoethanolamine + CoA. It carries out the reaction a 1-acyl-sn-glycero-3-phosphoethanolamine + hexadecanoyl-CoA = 1-acyl-2-hexadecanoyl-sn-glycero-3-phosphoethanolamine + CoA. Loses its lipolytic activity in cells lacking nonpolar lipids. In terms of biological role, lipid particle-localized triacylglycerol (TAG) lipase. The lipid droplet/particle is a lipid storage compartment which serves as a depot of energy and building blocks for membrane lipid biosynthesis. Involved in the mobilization of the non-polar storage lipids triacylglycerols (TAGs) from lipid particles by hydrolysis of TAGs, releasing and supplying specific fatty acids to the appropriate metabolic pathways. Also catalyzes the acylation of lysophosphatidic acid (LPA). Important for efficient sporulation, but rather through its acyltransferase than lipase activity. The polypeptide is Triacylglycerol lipase 3 (TGL3) (Saccharomyces cerevisiae (strain ATCC 204508 / S288c) (Baker's yeast)).